The primary structure comprises 194 residues: Der GTPase-activating protein YihI (194 aa).

The segment at M1–K87 is disordered. Positions T37 to D48 are enriched in basic and acidic residues.

Belongs to the YihI family. In terms of assembly, interacts with Der.

Functionally, a GTPase-activating protein (GAP) that modifies Der/EngA GTPase function. May play a role in ribosome biogenesis. The protein is Der GTPase-activating protein YihI of Mannheimia succiniciproducens (strain KCTC 0769BP / MBEL55E).